We begin with the raw amino-acid sequence, 476 residues long: MVNYFEIFLYISMFVLGYLSYYFCFGKNNNSSSKKNAYKLPPGSMGWPYIGETLQLYSQDPNAFFINRQRRFGEIFKTKILGCPCVMLASPEAARFVLVNQANLFKPTYPKSKENLIGQSAIFFHQGDYHNHLRKLVQAPLNPESIRNQIPYIEELSISALNSWVGGHVVNTYHEMKKFSFEVGILAIFGHLDGHVKEELKKNYSIVDKGYNSFPINLPGTLYRKALQARKKLGKILSEIIREMKEKKTLEKGLLSCFLNAKEEKGFLVLNEDQIADNIIGVLFAAQDTTASVLTWIIKYLHDNPKLLECVKAEQKVIWQSNEQENHGLTWTQTRKMPITSRVVLETLRMASIISFAFREAVADVEYKGYLIPKGWKVMPLFRNIHHNPEFFPDPQKFDPSRFENAPKPNTFMPFGSGVHACPGNELAKLEILIMTHHLVTKFRWEVVGSGSGIQYGPFPVPLGGLAARFWKTTST.

The helical transmembrane segment at 5-25 (FEIFLYISMFVLGYLSYYFCF) threads the bilayer. Cys422 provides a ligand contact to heme.

Belongs to the cytochrome P450 family. The cofactor is heme. Expressed in ovaries (specifically in ovules and placenta), sepals, petals and pedicels.

It localises to the membrane. It catalyses the reaction 2-cis-(+)-abscisate + reduced [NADPH--hemoprotein reductase] + O2 = (+)-8'-hydroxyabscisate + oxidized [NADPH--hemoprotein reductase] + H2O + H(+). It functions in the pathway plant hormone degradation; abscisic acid degradation. Involved in the oxidative degradation of abscisic acid, especially in pollinated ovaries. The protein is Abscisic acid 8'-hydroxylase CYP707A1 of Solanum lycopersicum (Tomato).